Reading from the N-terminus, the 367-residue chain is Nodulation protein 10 (367 aa).

The next 11 membrane-spanning stretches (helical) occupy residues 15–37, 46–66, 88–108, 109–129, 155–175, 183–203, 208–228, 245–265, 270–290, 312–332, and 335–355; these read FDLL…WLHL, VFDL…SGFL, IFPA…VTGG, LNVT…LTAA, VLWT…LLEI, GALV…HFNI, NPFL…GVLA, WWLA…AAFI, AAPV…SAAH, MLVM…LWIV, and VGTV…AMKL.

This sequence belongs to the acyltransferase 3 family.

It localises to the cell membrane. Not known. NodX allows Rhizobium leguminosarum biovar viciae strain TOM to nodulate Afghanistan peas. This is Nodulation protein 10 (nodX) from Rhizobium leguminosarum bv. viciae.